A 219-amino-acid polypeptide reads, in one-letter code: Ras-related protein Rab-3B (219 aa).

A2 bears the N-acetylalanine mark. Residues S31, S32, V33, G34, K35, T36, S37, P49, and S53 each coordinate GTP. A GDP-binding site is contributed by S32. The GDP site is built by G34, K35, T36, and S37. T36 provides a ligand contact to Mg(2+). Residues 45 to 58 (DTFTPAFVSTVGID) carry the Switch 1 motif. T54 and D77 together coordinate Mg(2+). A Switch 2 motif is present at residues 78-96 (TAGQERYRTITTAYYRGAM). A GTP-binding site is contributed by G80. T86 bears the Phosphothreonine; by LRRK2 mark. Positions 135, 136, and 138 each coordinate GTP. 6 residues coordinate GDP: N135, K136, D138, M139, A166, and K167. A166 and K167 together coordinate GTP. A phosphoserine mark is found at S188 and S190. 2 S-geranylgeranyl cysteine lipidation sites follow: C217 and C219. A Cysteine methyl ester modification is found at C219.

It belongs to the small GTPase superfamily. Rab family. As to quaternary structure, interacts with RIMS1, RIMS2, RPH3A and RPH3AL. The GTP-bound form interacts with GAS8/DRC4 (via coiled-coil domains). The GTP-bound form interacts with REP15. Interacts with GDI2, CHM and CHML; phosphorylation at Thr-86 disrupts these interactions. Interacts with MADD (via uDENN domain); the GTP-bound form is preferred for interaction. Requires Mg(2+) as cofactor. In terms of processing, phosphorylation of Thr-86 in the switch II region by LRRK2 prevents the association of RAB regulatory proteins, including CHM, CHML and RAB GDP dissociation inhibitor GDI2.

Its subcellular location is the cell membrane. The protein resides in the golgi apparatus. The enzyme catalyses GTP + H2O = GDP + phosphate + H(+). Its activity is regulated as follows. Regulated by guanine nucleotide exchange factors (GEFs) which promote the exchange of bound GDP for free GTP. Regulated by GTPase activating proteins (GAPs) which increase the GTP hydrolysis activity. Inhibited by GDP dissociation inhibitors (GDIs) which prevent Rab-GDP dissociation. The small GTPases Rab are key regulators of intracellular membrane trafficking, from the formation of transport vesicles to their fusion with membranes. Rabs cycle between an inactive GDP-bound form and an active GTP-bound form that is able to recruit to membranes different sets of downstream effectors directly responsible for vesicle formation, movement, tethering and fusion. The chain is Ras-related protein Rab-3B from Homo sapiens (Human).